Reading from the N-terminus, the 320-residue chain is MSFASETKKELTNLEVKPCCLKAELSALLRMNGLLSFSNQQILVDVQTENAAIARRIYTLLKKGYTVTVELLVRKKMRLKKNNVYIVRIIDGAHELLKDLKILKEDFSLIRVISPELVKKKCCKRSYLRGAFLAGGSVNNPETSSYHLEIFSLYEEHNNSLCELMNSHFFLNAKTLERKKGFITYLKEAEKISEFLNIIGAHQALLRFEDIRIVRDMRNSVNRLVNCETANLNKTIGAALRQVENIRYIDETIGLSALPDKLREIAELRMMYQDVTLKELGELVSGGKISKSGINHRLRKIDEIAERLRAGKPVDFHKSL.

Residues Thr-276–Ala-310 constitute a DNA-binding region (H-T-H motif).

It belongs to the WhiA family.

In terms of biological role, involved in cell division and chromosome segregation. The chain is Probable cell division protein WhiA from Geobacillus sp. (strain WCH70).